A 594-amino-acid chain; its full sequence is Probable ABC transporter-binding protein DR_1571 (594 aa).

The first 18 residues, 1–18 (MKKVMMLALALGASTSLA), serve as a signal peptide directing secretion.

It belongs to the bacterial solute-binding protein 5 family.

In terms of biological role, probably part of a binding-protein-dependent transport system. The polypeptide is Probable ABC transporter-binding protein DR_1571 (Deinococcus radiodurans (strain ATCC 13939 / DSM 20539 / JCM 16871 / CCUG 27074 / LMG 4051 / NBRC 15346 / NCIMB 9279 / VKM B-1422 / R1)).